Here is a 364-residue protein sequence, read N- to C-terminus: UDP-N-acetylglucosamine--N-acetylmuramyl-(pentapeptide) pyrophosphoryl-undecaprenol N-acetylglucosamine transferase (364 aa).

Residues 10-12, N124, R166, S196, I252, and Q297 contribute to the UDP-N-acetyl-alpha-D-glucosamine site; that span reads TGG.

It belongs to the glycosyltransferase 28 family. MurG subfamily.

The protein resides in the cell membrane. It catalyses the reaction di-trans,octa-cis-undecaprenyl diphospho-N-acetyl-alpha-D-muramoyl-L-alanyl-D-glutamyl-meso-2,6-diaminopimeloyl-D-alanyl-D-alanine + UDP-N-acetyl-alpha-D-glucosamine = di-trans,octa-cis-undecaprenyl diphospho-[N-acetyl-alpha-D-glucosaminyl-(1-&gt;4)]-N-acetyl-alpha-D-muramoyl-L-alanyl-D-glutamyl-meso-2,6-diaminopimeloyl-D-alanyl-D-alanine + UDP + H(+). Its pathway is cell wall biogenesis; peptidoglycan biosynthesis. In terms of biological role, cell wall formation. Catalyzes the transfer of a GlcNAc subunit on undecaprenyl-pyrophosphoryl-MurNAc-pentapeptide (lipid intermediate I) to form undecaprenyl-pyrophosphoryl-MurNAc-(pentapeptide)GlcNAc (lipid intermediate II). This Ruminiclostridium cellulolyticum (strain ATCC 35319 / DSM 5812 / JCM 6584 / H10) (Clostridium cellulolyticum) protein is UDP-N-acetylglucosamine--N-acetylmuramyl-(pentapeptide) pyrophosphoryl-undecaprenol N-acetylglucosamine transferase.